Here is a 281-residue protein sequence, read N- to C-terminus: Digeranylgeranylglyceryl phosphate synthase (281 aa).

Helical transmembrane passes span 14–34 (AMAA…LSSA), 38–58 (VSLS…VTGA), 95–115 (LFLF…CGII), 149–169 (FLFG…VLFL), 207–227 (ASYI…VPYL), 235–255 (YLFV…QILG), and 259–279 (AARS…SFIV).

This sequence belongs to the UbiA prenyltransferase family. DGGGP synthase subfamily. Requires Mg(2+) as cofactor.

The protein resides in the cell membrane. It catalyses the reaction sn-3-O-(geranylgeranyl)glycerol 1-phosphate + (2E,6E,10E)-geranylgeranyl diphosphate = 2,3-bis-O-(geranylgeranyl)-sn-glycerol 1-phosphate + diphosphate. The protein operates within membrane lipid metabolism; glycerophospholipid metabolism. Its function is as follows. Prenyltransferase that catalyzes the transfer of the geranylgeranyl moiety of geranylgeranyl diphosphate (GGPP) to the C2 hydroxyl of (S)-3-O-geranylgeranylglyceryl phosphate (GGGP). This reaction is the second ether-bond-formation step in the biosynthesis of archaeal membrane lipids. The protein is Digeranylgeranylglyceryl phosphate synthase of Methanococcoides burtonii (strain DSM 6242 / NBRC 107633 / OCM 468 / ACE-M).